We begin with the raw amino-acid sequence, 128 residues long: Gastrotropin (128 aa).

N-acetylalanine is present on Ala2.

The protein belongs to the calycin superfamily. Fatty-acid binding protein (FABP) family. In terms of tissue distribution, found exclusively in the ileum and to a lesser extent in distal jejunum.

The protein localises to the cytoplasm. Its subcellular location is the membrane. Functionally, binds to bile acids and is involved in enterohepatic bile acid metabolism. Required for efficient apical to basolateral transport of conjugated bile acids in ileal enterocytes. Stimulates gastric acid and pepsinogen secretion. This is Gastrotropin (FABP6) from Sus scrofa (Pig).